The sequence spans 710 residues: Amyloid beta precursor protein binding family B member 1 (710 aa).

S135 is subject to Phosphoserine. Disordered regions lie at residues 143 to 256 (EQGP…SDLP) and 276 to 300 (GTTQWEPPGRASPSQGSSPQEESQL). Acidic residues predominate over residues 145–173 (GPDEGEEKAAGEAEEDDEDEEEEEEEEDL). K204 is modified (N6-acetyllysine). Residues 223 to 234 (SWATLSQGSPSY) show a composition bias toward polar residues. Positions 253-285 (SDLPAGWMRVQDTSGTYYWHIPTGTTQWEPPGR) constitute a WW domain. The span at 287 to 299 (SPSQGSSPQEESQ) shows a compositional bias: low complexity. Residues 370 to 509 (FAVRSLGWVE…SKIMSERRNA (140 aa)) enclose the PID 1 domain. S459 carries the phosphoserine; by PKC modification. A Phosphoserine modification is found at S517. A PID 2 domain is found at 542–699 (KFQVYYLGNV…RRGVQSLWGS (158 aa)). Y547 bears the Phosphotyrosine; by ABL1 mark. At S610 the chain carries Phosphoserine; by SGK1. K701 carries the N6-acetyllysine modification.

Component of a complex, at least composed of APBB1, RASD1/DEXRAS1 and APP. Interacts (via PID domain 2) with APP (with the intracellular domain of the amyloid-beta precursor protein). Interacts (via PID domain 2) with RASD1/DEXRAS1; impairs the transcription activation activity. Interacts (via PID domain 1) with KAT5/TIP60. Interacts (via the WW domain) with the proline-rich region of APBB1IP. Interacts with TSHZ1 and TSHZ2. Interacts (via the WW domain) with histone H2AX (when phosphorylated on 'Tyr-142') and the proline-rich region of ENAH. Interacts with MAPK8. Interacts (via PID domain 1) with TSHZ3 (via homeobox domain). Interacts with SET. Found in a trimeric complex with HDAC1 and TSHZ3; the interaction between HDAC1 and APBB1 is mediated by TSHZ3. Interacts (via WWW domain) with NEK6. Interacts (via WWW domain) with ABL1. Interacts with RNF157. Interacts with ARF6. Post-translationally, polyubiquitination by RNF157 leads to degradation by the proteasome. Phosphorylation at Ser-610 by SGK1 promotes its localization to the nucleus. Phosphorylated following nuclear translocation. Phosphorylation at Tyr-546 by ABL1 enhances transcriptional activation activity and reduces the affinity for RASD1/DEXRAS1. In terms of processing, acetylation at Lys-204 and Lys-701 by KAT5 promotes its transcription activator activity. Phosphorylated at Ser-459 by PKC upon insulin activation. Expressed in the brain, retinal lens and muscle cells (at protein level).

Its subcellular location is the cell membrane. The protein resides in the cytoplasm. It localises to the nucleus. The protein localises to the cell projection. It is found in the growth cone. Its subcellular location is the nucleus speckle. Its function is as follows. Transcription coregulator that can have both coactivator and corepressor functions. Adapter protein that forms a transcriptionally active complex with the gamma-secretase-derived amyloid precursor protein (APP) intracellular domain. Plays a central role in the response to DNA damage by translocating to the nucleus and inducing apoptosis. May act by specifically recognizing and binding histone H2AX phosphorylated on 'Tyr-142' (H2AXY142ph) at double-strand breaks (DSBs), recruiting other pro-apoptosis factors such as MAPK8/JNK1. Required for histone H4 acetylation at double-strand breaks (DSBs). Its ability to specifically bind modified histones and chromatin modifying enzymes such as KAT5/TIP60, probably explains its transcription activation activity. Functions in association with TSHZ3, SET and HDAC factors as a transcriptional repressor, that inhibits the expression of CASP4. Associates with chromatin in a region surrounding the CASP4 transcriptional start site(s). Involved in hippocampal neurite branching and neuromuscular junction formation, as a result plays a role in spatial memory functioning. Plays a role in the maintenance of lens transparency. May play a role in muscle cell strength. Acts as a molecular adapter that functions in neurite outgrowth by activating the RAC1-ARF6 axis upon insulin treatment. The protein is Amyloid beta precursor protein binding family B member 1 of Mus musculus (Mouse).